A 130-amino-acid chain; its full sequence is MMRQSLQAVLPEISGNKTSLLRKSVCSDLLTLFNSPHSTLPSLLVSGMPEWQVHNPSDKHLQSWYCRQLRSALLFHEPRIAALQVNLKEAYCHTLAISLEIMLYHDDEPLTFDLVWDNGGWRSATLENVS.

Belongs to the GpW/Gp25 family. IraD subfamily. In terms of assembly, interacts with RssB.

The protein resides in the cytoplasm. Inhibits RpoS proteolysis by regulating RssB activity, thereby increasing the stability of the sigma stress factor RpoS during oxidative stress. Its effect on RpoS stability is due to its interaction with RssB, which probably blocks the interaction of RssB with RpoS, and the consequent delivery of the RssB-RpoS complex to the ClpXP protein degradation pathway. The sequence is that of Anti-adapter protein IraD from Escherichia coli O157:H7.